The primary structure comprises 160 residues: Cytosolic iron-sulfur assembly component 2A (160 aa).

Residues His89, His123, Glu150, and Glu153 each contribute to the Zn(2+) site.

The protein belongs to the MIP18 family. As to quaternary structure, monomer and homodimer. Component of the CIA complex. Interacts with CIAO1. Interacts with IREB2. Interacts with APAF1.

Its subcellular location is the cytoplasm. In terms of biological role, component of the cytosolic iron-sulfur protein assembly (CIA) complex, a multiprotein complex that mediates the incorporation of iron-sulfur cluster into extramitochondrial Fe/S proteins. As a CIA complex component and in collaboration with CIAO1 specifically matures ACO1 and stabilizes IREB2, connecting cytosolic iron-sulfur protein maturation with cellular iron regulation. May play a role in chromosome segregation through establishment of sister chromatid cohesion. May induce apoptosis in collaboration with APAF1. The protein is Cytosolic iron-sulfur assembly component 2A of Bos taurus (Bovine).